Consider the following 306-residue polypeptide: Dioxygenase FrzG (306 aa).

Positions 132, 134, and 216 each coordinate Fe cation.

It belongs to the PhyH family. Homodimer. Requires Fe cation as cofactor.

It catalyses the reaction (1S,4S)-4-[(4-methoxyphenyl)methyl]-2-methyl-2,5-diazaspiro[bicyclo[3.2.1]octane-6,1'-cyclohexan]-4'-one + 2-oxoglutarate + O2 = (2S)-3-(4-methoxyphenyl)-2-[(3S)-3-(methylamino)-8-oxo-1-azaspiro[4.5]decan-1-yl]propanal + succinate + CO2. The protein operates within secondary metabolite biosynthesis. In terms of biological role, dioxygenase; part of the gene cluster that mediates the biosynthesis of the alkaloid (-)-FR901483, a potent immunosuppressant that shows efficacy in animal models and a probable inhibitor of purine nucleotide biosynthesis by targeting phosphoribosylpyrophosphate amidotransferase (PPAT). Within the pathway, FrzG cleaves the C9-N10' bond to yield a conjugated iminium. FrzG is also able to catalyze the dehydrogenation between C7 and C8 which leads to a shunt product. The biosynthesis of (-)-FR901483 starts with the condensation of two L-tyrosines to yield (S,S)-dityrosyl-piperazine. This process occurs in 3 steps with the non-canonical nonribosomal peptide synthetase FrzA catalyzing the reduction of L-tyrosine into L-tyrosinal, the spontaneous condensation of 2 L-tyrosinal units, and the subsequent reduction by the NmrA-like family domain-containing oxidoreductase FrzB. The cytochrome P450 monooxygenase FrzC then performs coupling between N10 and C1' to morph the piperazine into a 1,4-diazabicyclo[3.2.1]octane spiro-fused to a 2,5-cyclohexadienone. The dienone portion is further reduced to cyclohexanone by the flavin-dependent reductase FrzD. The methyltranserases (MTs) FrzE and FrzF are then involved in the methylation at the C10' amine and the C4 phenolic oxygen, respectively. The order of the two MTs appear to be interchangeable. Cleavage of the C9-N10' bond by the dioxygenase FrzG then leads to formation of a conjugated iminium. In addition to the oxidation of C9, an additional dehydrogenation between C7 and C8 can occur to give a likely shunt product. The next biosynthetic step is the intramolecular aldol condensation catalyzed by the newly identified aldolase FrzH to yield an aza-tricyclic product with the formation of a C9-C3' bond. The short-chain dehydrogenase/reductase FrzI then produces dephospho-(-)-FR901483 that is phosphorylated at C4'-OH into (-)-FR901483 by the phosphotransferase FrzJ. This chain is Dioxygenase FrzG, found in Cladobotryum sp.